A 103-amino-acid polypeptide reads, in one-letter code: Nematocin (103 aa).

A signal peptide spans 1 to 19; that stretch reads MGSSPILLVLAISIGLASA. Cysteines 20 and 25 form a disulfide. The residue at position 30 (Tyr-30) is a Tyrosine amide. The propeptide occupies 31-103; that stretch reads GRTIRCSSCG…QGGCQTSAMC (73 aa).

This sequence belongs to the vasopressin/oxytocin family. As to expression, detected in thermosensory AFD neurons, neurosecretory NSM cells, AVK interneurons, pharyngeal neuron M5, and the mechanosensory DVA neuron. Detected in male-specific CP motor neurons.

The protein resides in the secreted. Functionally, ligand for the G-protein coupled receptor ntr-1. Plays a role in gustatory associative learning. Also plays a role in male mating behavior. The polypeptide is Nematocin (Caenorhabditis elegans).